Consider the following 76-residue polypeptide: Large ribosomal subunit protein eL29 (76 aa).

The segment covering 1–29 (MAKSKNHTNHNQNKKAHRNGIKRPLRKRH) has biased composition (basic residues). Disordered regions lie at residues 1-33 (MAKSKNHTNHNQNKKAHRNGIKRPLRKRHESTL) and 47-76 (RKGNLSREESVKRYNERIASQKGKPKPVTL). S31 bears the Phosphoserine mark. The span at 51 to 62 (LSREESVKRYNE) shows a compositional bias: basic and acidic residues.

The protein belongs to the eukaryotic ribosomal protein eL29 family.

In Drosophila melanogaster (Fruit fly), this protein is Large ribosomal subunit protein eL29 (RpL29).